The chain runs to 330 residues: Putative aminohydrolase AF_1775 (330 aa).

Zn(2+)-binding residues include H54, H56, H181, and D253.

This sequence belongs to the metallo-dependent hydrolases superfamily. ATZ/TRZ family.

This is Putative aminohydrolase AF_1775 from Archaeoglobus fulgidus (strain ATCC 49558 / DSM 4304 / JCM 9628 / NBRC 100126 / VC-16).